The chain runs to 412 residues: 8-amino-7-oxononanoate synthase (412 aa).

Position 106–107 (106–107 (GY)) interacts with pyridoxal 5'-phosphate. His131 is a substrate binding site. Pyridoxal 5'-phosphate contacts are provided by Ser187, His219, and Thr247. Lys250 carries the N6-(pyridoxal phosphate)lysine modification. Thr370 lines the substrate pocket.

This sequence belongs to the class-II pyridoxal-phosphate-dependent aminotransferase family. BioF subfamily. In terms of assembly, homodimer. Pyridoxal 5'-phosphate serves as cofactor.

The enzyme catalyses 6-carboxyhexanoyl-[ACP] + L-alanine + H(+) = (8S)-8-amino-7-oxononanoate + holo-[ACP] + CO2. It participates in cofactor biosynthesis; biotin biosynthesis. 8-amino-7-oxononanoate synthase; part of the cluster involved in the biosynthesis of biotin (also known as vitamin B8 or vitamin H), a water-soluble vitamin that functions as a prosthetic group of many carboxylases, such as acetyl-CoA carboxylase and pyruvate carboxylase. Catalyzes the decarboxylative condensation of pimeloyl-[acyl-carrier protein] and L-alanine to produce 8-amino-7-oxononanoate (AON). This Emericella nidulans (strain FGSC A4 / ATCC 38163 / CBS 112.46 / NRRL 194 / M139) (Aspergillus nidulans) protein is 8-amino-7-oxononanoate synthase.